A 1380-amino-acid chain; its full sequence is MAMQIRPSLGGCLRHGGAGDHAARRLSRLRAAKVFVPTAVVCVLLCCAPWVMAEITNDAEREPVYILNAMYSTEAYTNEDAKALWTGMDMAFYNSHYKAAGGRPIKILHPDPDQDNLYDIAEVILHSLARQEKLLAVLGPYLDGRLTAALSNADVVQSGLMLIAPFTGSSGVRTWSDSVYFTRAEPMVELKVVLMHIVNRLRARRVAFMRLTGMHFGGEELTYVQDTLTSLLRDPAVLYTVPYSESSVEVDEEAFDAMADTNPQVIIVWAAPVQQVIYFLEKVLTDPRTSSAYVISCSMIQRVVFDVYKRLLSAGSIKPQDGRILASATTSPVSGEGLKYMEVLKAQMSNYIENSGSFDYYPDDDSTETLGRKARSEAPLSRKYTVDEFFQAHPSIAKLMALGWLSGTLVQQTLEQTDWIVNRSTYKAGLFNQNRFVIGGDYVLGDYGGPCEPLAQFLGASCYCNQGGHSSILTVLQNASWDIVPDSSFKYPQSECNSSKSQIVKAVSVLALLNQGYPKLIDAGMQLNEVLPHAFDDNLCKGYKVSSIFLRVETAKAQQLFDAEVSNYSVDIIAGPIFQALDVGEIFVLNPLYNHPQLRTEKRNYVYLMPTLEQQIYVMYSKIDALRTRTDVFEDTAVVLRGYSAQEVVEISEILFKTAGTFNLPDPSVATISFTDSLRGLLSPRAINVVIGMKDGDSAHFANFLAKYTDVMVVVCFDELTMYYEELRATFSVQPTSVQARLMSFSSLPLWTDASAEAKARWPILGHFHKIFPDPINHTPSLLRDVIIAGFIQELVSTTTVAETKLLTNAVYINGGVTTYGFTLGNFEWGCTATTSGDSCVYKNYGASNIEILSIQRMLDPTVPQLSSPSTPTMEYRPRQRSHALTPAQRNGLIAGCVVGAVVLIATCTLLLYCCMDNRNNDAAPKDGDEPVTLLFTDIESSTALWAALPQLMSDAIAAHHRVIRQLVKKYGCYEVKTIGDSFMIACRSAHSAVSLACEIQTKLLKHDWGTEALDRAYREFELARVDTLDDYEPPTARLSEEEYAALWCGLRVRVGIHTGLTDIRYDEVTKGYDYYGDTSNMAARTEAVANGGQVVATEAAWWALSNDERAGIAHTAMGPQGLRGVPFAVEMFQLNAVPGRRHAALRTEIEAILPDDTATDTASSAAGALLSSVETMSDPAAGIAFVLASCFAPYPVAQRVRELQPLLSKWGVGAPPRSRLVSEEDYCQGLMNRLAIRIATVSQARLRLTREDAADGKFKLASSEALNPLAREGDSAAGGVRPRLPGSPVTSLPAGGSSSMREWRVFTRLMNDTQHPSVTHLSQQRPSNLTSFTEAQDAAFPLNAHCGPESRVENSGADDEEIVIVRVSRNPHYARHAFE.

The Cytoplasmic portion of the chain corresponds to 1 to 34 (MAMQIRPSLGGCLRHGGAGDHAARRLSRLRAAKV). The helical transmembrane segment at 35-55 (FVPTAVVCVLLCCAPWVMAEI) threads the bilayer. Residues 56–891 (TNDAEREPVY…SHALTPAQRN (836 aa)) are Extracellular-facing. N-linked (GlcNAc...) asparagine glycans are attached at residues Asn422, Asn478, Asn497, and Asn567. The chain crosses the membrane as a helical span at residues 892–912 (GLIAGCVVGAVVLIATCTLLL). The Cytoplasmic segment spans residues 913–1380 (YCCMDNRNND…NPHYARHAFE (468 aa)). Residues 933 to 1087 (TLLFTDIESS…DTSNMAARTE (155 aa)) enclose the Guanylate cyclase domain. Mg(2+)-binding residues include Asp938 and Asp981. The segment at 1270 to 1298 (LAREGDSAAGGVRPRLPGSPVTSLPAGGS) is disordered.

The protein belongs to the adenylyl cyclase class-3 family. The cofactor is Mg(2+).

It localises to the membrane. It carries out the reaction ATP = 3',5'-cyclic AMP + diphosphate. Its function is as follows. Could act as a receptor for an unknown ligand. The sequence is that of Receptor-type adenylate cyclase A (RAC-A) from Leishmania donovani.